The primary structure comprises 252 residues: Isoprenyl transferase (252 aa).

Residue Asp32 is part of the active site. Residue Asp32 coordinates Mg(2+). Substrate is bound by residues Gly33–Arg36, Trp37, Arg45, His49, and Ser77–Glu79. Catalysis depends on Asn80, which acts as the Proton acceptor. Residues Trp81, Arg83, Arg200, and Arg206 to Ser208 each bind substrate. Mg(2+) is bound at residue Glu219.

Belongs to the UPP synthase family. Homodimer. Mg(2+) serves as cofactor.

In terms of biological role, catalyzes the condensation of isopentenyl diphosphate (IPP) with allylic pyrophosphates generating different type of terpenoids. This is Isoprenyl transferase from Listeria innocua serovar 6a (strain ATCC BAA-680 / CLIP 11262).